Reading from the N-terminus, the 109-residue chain is Nucleoid-associated protein VS_0917 (109 aa).

2 disordered regions span residues 1-22 (MFGK…ERMQ) and 88-109 (QKEK…KMPF). Positions 9-18 (NMMKQAQQMQ) are enriched in low complexity.

It belongs to the YbaB/EbfC family. In terms of assembly, homodimer.

It is found in the cytoplasm. It localises to the nucleoid. In terms of biological role, binds to DNA and alters its conformation. May be involved in regulation of gene expression, nucleoid organization and DNA protection. The protein is Nucleoid-associated protein VS_0917 of Vibrio atlanticus (strain LGP32) (Vibrio splendidus (strain Mel32)).